A 274-amino-acid polypeptide reads, in one-letter code: ATP synthase subunit a (274 aa).

5 consecutive transmembrane segments (helical) span residues T43–F63, V103–L123, D149–I169, L223–P243, and A245–V265.

It belongs to the ATPase A chain family. In terms of assembly, F-type ATPases have 2 components, CF(1) - the catalytic core - and CF(0) - the membrane proton channel. CF(1) has five subunits: alpha(3), beta(3), gamma(1), delta(1), epsilon(1). CF(0) has three main subunits: a(1), b(2) and c(9-12). The alpha and beta chains form an alternating ring which encloses part of the gamma chain. CF(1) is attached to CF(0) by a central stalk formed by the gamma and epsilon chains, while a peripheral stalk is formed by the delta and b chains.

The protein localises to the cell inner membrane. Its function is as follows. Key component of the proton channel; it plays a direct role in the translocation of protons across the membrane. This chain is ATP synthase subunit a, found in Yersinia pestis bv. Antiqua (strain Antiqua).